Consider the following 542-residue polypeptide: MSILALVEDRPTPKEVYNWKIYLLAAVASFTSCMIGYDSAFIGTTLALSSFREEFGFSTMSKTAVNLVSANIVSCYQAGAFFGAFFAYPIGHFWGRKWGLLFAGTIFTLGAGLMLGANGDRGLGLLYGGRVLAGLGVGAGSNITPIYISEMAPPSIRGRLVGVYELGWQIGGLVGFWINYGVSETLAPSHKQWIIPFAVQLIPSGLLLIGAVFLKESPRWLFSRGRREDAIKNLCWIRQLPADHIYMIEEIGAVDQALEEQRTTIGLGFWKPFKAAGTNKKVMYRLFLGSMLFFWQNGSGINAINYYSPTVFKSIGLHGANTSMFSTGIFGVVKTVVTFVWLLYLIDRVGRRLLLLIGAAGAAVCLLIVGAYIKIADPASNPTQEMTGGGIAAMFFFYLYTVFYTPSWNGTPWVMNSEMFEPNMRSLAQACAAASNWLWNFLISRFTPQMFAKMEYGVWFFFASLMLLSIVFVFFLVPETKGIPLESMDVLFESKPIWRAHATVLAKLREDEEQFRHDIEESGYSKTGEQQVEHVSEDLPKV.

At 1-22 the chain is on the cytoplasmic side; sequence MSILALVEDRPTPKEVYNWKIY. Residues 23–43 form a helical membrane-spanning segment; it reads LLAAVASFTSCMIGYDSAFIG. Over 44 to 74 the chain is Extracellular; it reads TTLALSSFREEFGFSTMSKTAVNLVSANIVS. The chain crosses the membrane as a helical span at residues 75 to 95; sequence CYQAGAFFGAFFAYPIGHFWG. Residues 96 to 97 lie on the Cytoplasmic side of the membrane; it reads RK. A helical membrane pass occupies residues 98–118; that stretch reads WGLLFAGTIFTLGAGLMLGAN. Topologically, residues 119–130 are extracellular; the sequence is GDRGLGLLYGGR. A helical membrane pass occupies residues 131–151; it reads VLAGLGVGAGSNITPIYISEM. Residues 152 to 159 lie on the Cytoplasmic side of the membrane; it reads APPSIRGR. A helical transmembrane segment spans residues 160–180; sequence LVGVYELGWQIGGLVGFWINY. Over 181-193 the chain is Extracellular; the sequence is GVSETLAPSHKQW. Residues 194–214 traverse the membrane as a helical segment; it reads IIPFAVQLIPSGLLLIGAVFL. The Cytoplasmic portion of the chain corresponds to 215–285; that stretch reads KESPRWLFSR…AGTNKKVMYR (71 aa). The chain crosses the membrane as a helical span at residues 286–306; that stretch reads LFLGSMLFFWQNGSGINAINY. The Extracellular portion of the chain corresponds to 307–325; that stretch reads YSPTVFKSIGLHGANTSMF. The helical transmembrane segment at 326-346 threads the bilayer; that stretch reads STGIFGVVKTVVTFVWLLYLI. Over 347–352 the chain is Cytoplasmic; that stretch reads DRVGRR. A helical transmembrane segment spans residues 353–373; the sequence is LLLLIGAAGAAVCLLIVGAYI. The Extracellular portion of the chain corresponds to 374–387; it reads KIADPASNPTQEMT. A helical membrane pass occupies residues 388–408; that stretch reads GGGIAAMFFFYLYTVFYTPSW. The Cytoplasmic segment spans residues 409 to 456; that stretch reads NGTPWVMNSEMFEPNMRSLAQACAAASNWLWNFLISRFTPQMFAKMEY. Residues 457-477 traverse the membrane as a helical segment; that stretch reads GVWFFFASLMLLSIVFVFFLV. The Extracellular segment spans residues 478-542; sequence PETKGIPLES…EHVSEDLPKV (65 aa). The interval 523-542 is disordered; sequence GYSKTGEQQVEHVSEDLPKV. Positions 531–542 are enriched in basic and acidic residues; that stretch reads QVEHVSEDLPKV.

The protein belongs to the major facilitator superfamily. Sugar transporter (TC 2.A.1.1) family. In terms of assembly, interacts with creB. Post-translationally, ubiquitinated. Deubiquitinated by creB, probably to control its activity or amount.

The protein localises to the cell membrane. Integral membrane transporter that imports quinic acid to be catabolized as a carbon source. The polypeptide is Probable quinate permease (qutD) (Aspergillus fumigatus (strain ATCC MYA-4609 / CBS 101355 / FGSC A1100 / Af293) (Neosartorya fumigata)).